The sequence spans 345 residues: Calcium uniporter regulatory subunit MCUb, mitochondrial (345 aa).

Residues 1–44 constitute a mitochondrion transit peptide; sequence MPGALSGRRMLPSGLCLGRWQLLRTIRARGRGDPRELPSTPQVL. Positions 188-221 form a coiled coil; the sequence is EIQKRRERHLMAKIDHLQEQLRPLEQVKAAIEAR. A run of 2 helical transmembrane segments spans residues 229–249 and 259–279; these read LLWA…WLTW and PVTF…FIIT. Residues 306–334 are a coiled coil; that stretch reads FDVEQYNKLKEDLAEATESLESVRRSLRL.

Belongs to the MCU (TC 1.A.77) family. In terms of assembly, homooligomer. Associates with the uniplex complex, composed of MCU, MICU1, MICU2 and EMRE/SMDT1, inhibiting its activity. As to expression, detected in lung, brain and heart, and at lower levels in white fat, skeletal muscle and spleen. Detected at very low levels in kidney and liver. Highly expressed in macrophages during the progression of skeletal muscle regeneration.

It is found in the mitochondrion inner membrane. Negative regulator of the mitochondrial calcium uniporter (MCU), a channel that mediates calcium uptake into the mitochondrial matrix. MCUB is required to limit mitochondrial calcium overload during stress. Acts as a dominant-negative regulator that displaces MCU from the functional uniplex complex and thereby decreases the association of calcium sensors MICU1 and MICU2, preventing channel gating. Mitochondrial calcium homeostasis plays key roles in mitochondrial metabolism. Acts as an important regulator of mitochondrial metabolism in response to stress in muscle cells: induced in response to fasting, leading to restrict mitochondrial calcium uptake, resulting in reprogramming of mitochondria toward fatty acid oxidation preference. Acts as a regulator of macrophage polarization during skeletal muscle regeneration: inhibition of mitochondrial calcium uptake drives differentiation of macrophages with anti-inflammatory profile, promoting the differentiation and fusion of satellite cells. In Mus musculus (Mouse), this protein is Calcium uniporter regulatory subunit MCUb, mitochondrial.